We begin with the raw amino-acid sequence, 230 residues long: MKTLVICSGGLDSVSLAHKVAAEHDLIGLISFDYGQRHRKELDFAARAATRLGVPHDLIDMRQIGAHLSGSALTDDVDVPDGHYAEDTMKITVVPNRNAIMLAIAFGIAAAKQADAVATAVHGGDHFIYPDCRPGFTQAFEAMQAQALDGYASVRLYTPFVHEPKSAIVTEGERHNTPFADTWSCYKGGEVHCGRCGTCVERREAFHLAGVADPTPYADPEFWRAAVEGR.

7–17 lines the ATP pocket; the sequence is CSGGLDSVSLA. Residues Cys185, Cys193, Cys196, and Cys199 each coordinate Zn(2+).

Belongs to the QueC family. The cofactor is Zn(2+).

The enzyme catalyses 7-carboxy-7-deazaguanine + NH4(+) + ATP = 7-cyano-7-deazaguanine + ADP + phosphate + H2O + H(+). Its pathway is purine metabolism; 7-cyano-7-deazaguanine biosynthesis. Functionally, catalyzes the ATP-dependent conversion of 7-carboxy-7-deazaguanine (CDG) to 7-cyano-7-deazaguanine (preQ(0)). This Ruegeria pomeroyi (strain ATCC 700808 / DSM 15171 / DSS-3) (Silicibacter pomeroyi) protein is 7-cyano-7-deazaguanine synthase.